Reading from the N-terminus, the 1388-residue chain is Endoribonuclease Dicer homolog 2 (1388 aa).

A Helicase ATP-binding domain is found at 31 to 210 (ALEKAIKQNT…DSYWKKIHEL (180 aa)). 44–51 (LETGSGKT) lines the ATP pocket. The DECH box signature appears at 152 to 155 (DECH). One can recognise a Helicase C-terminal domain in the interval 380-544 (LGYSSLENIR…PLPDDSDEPL (165 aa)). The Dicer dsRNA-binding fold domain occupies 559 to 645 (SVSLIYHYCS…VPDMVVAETV (87 aa)). In terms of domain architecture, PAZ spans 805-935 (TSHEVLEKHE…LPPELCHVIL (131 aa)). 2 RNase III domains span residues 962–1113 (AYNL…SEGG) and 1149–1296 (VGYM…VDSG). Mg(2+) is bound by residues Glu1188, Asp1282, and Glu1285. Residues 1315 to 1384 (TPETVKLHPV…YKEVLNLLKN (70 aa)) form the DRBM domain.

It belongs to the helicase family. Dicer subfamily. Requires Mg(2+) as cofactor. Mn(2+) serves as cofactor.

The protein resides in the nucleus. It is found in the cytoplasm. Its function is as follows. Ribonuclease (RNase) III involved in RNA-mediated post-transcriptional gene silencing (PTGS). Involved in the processing of natural small interfering RNAs (nat-siRNAs, derived from cis-natural antisense transcripts) by cleaving small dsRNAs into 24 nucleotide nat-siRNAs. Plays an essential role in transitive silencing of transgenes by processing secondary siRNAs. This pathway, which requires DCL4 and RDR6, amplifies silencing by using the target RNA as substrate to generate secondary siRNAs, providing an efficient mechanism for long-distance silencing. May participate with DCL3 in the production of 24 nucleotide repeat-associated siRNAs (ra-siRNAs) which derive from heterochromatin and DNA repeats such as transposons. Plays a role in antiviral RNA silencing. Involved in the production of viral siRNAs derived from the turnip crinkle virus (TCV) and tobacco rattle virus (TRV). Targeted by the viral silencing suppressor (VSR) protein 2b of the cucumber mosaic virus (CMV) that inactivates DCL2 function in RNA silencing. Does not seem to be involved in microRNAs (miRNAs) processing. This chain is Endoribonuclease Dicer homolog 2, found in Arabidopsis thaliana (Mouse-ear cress).